Reading from the N-terminus, the 406-residue chain is MQELDSSNDEWVKELEGENEESKFTGRRLVKKSISVPELVDEVEEDLDDFTEPADDFNDKVGKKRQRKKKDESGLEKTKKNKKQNSEEVQEMWDSITNNTNSQYGDKVVVKPPKKKDEDAEEIKKLFSLRKKKSKCDKTSMEIGMQVEQVMANLEIAVEDDVICNREGKPAINKLMKLPLLNETLSKKPLQGEFLDHGVLNLLKNWLEPLPDGSLPNINIRSAVLMILNDFRIDLDQDSRREQLIKSGLGKVIMFLSKSDEETTPNRRLANDIINKWGRIIYNKSTRYDNMFTQEELDEQRQILLRRQTKTAPKVSGTRARDFNTDIDLYELGTWTGRARAKIPTTMSMDFKIRPPSKVDINQEEEPCSKWQMEKRHKNKQQKNIRKGGMQALKLSVDGRTMLKYL.

2 disordered regions span residues 1–28 (MQEL…TGRR) and 41–89 (DEVE…SEEV). Basic and acidic residues predominate over residues 10–24 (EWVKELEGENEESKF). Over residues 41–56 (DEVEEDLDDFTEPADD) the composition is skewed to acidic residues. Basic and acidic residues predominate over residues 69–78 (KKDESGLEKT). The 84-residue stretch at 201 to 284 (NLLKNWLEPL…NKWGRIIYNK (84 aa)) folds into the TFIIS N-terminal domain.

Belongs to the IWS1 family.

It localises to the nucleus. Functionally, transcription factor involved in RNA polymerase II (RNAPII) transcription regulation. Involved in transcription elongation. May function at post-recruitment and elongation steps of transcription. In Arabidopsis thaliana (Mouse-ear cress), this protein is Protein IWS1 homolog 2.